The chain runs to 81 residues: Small ribosomal subunit protein eS21 (81 aa).

The protein belongs to the eukaryotic ribosomal protein eS21 family. Component of the 40S small ribosomal subunit.

It localises to the cytoplasm. The protein resides in the cytosol. Its subcellular location is the rough endoplasmic reticulum. Functionally, component of the small ribosomal subunit. The ribosome is a large ribonucleoprotein complex responsible for the synthesis of proteins in the cell. This Danio rerio (Zebrafish) protein is Small ribosomal subunit protein eS21 (rps21).